We begin with the raw amino-acid sequence, 116 residues long: Transcription elongation factor SPT4 homolog 1 (116 aa).

The segment at 19-39 (CLRCRLVKTYDQFRDSGCENC) adopts a C4-type zinc-finger fold.

Belongs to the SPT4 family.

It is found in the nucleus. Functionally, may regulate transcription elongation by RNA polymerase II. May enhance transcriptional pausing at sites proximal to the promoter, which may in turn facilitate the assembly of an elongation competent RNA polymerase II complex. The sequence is that of Transcription elongation factor SPT4 homolog 1 from Arabidopsis thaliana (Mouse-ear cress).